An 80-amino-acid polypeptide reads, in one-letter code: Acyl carrier protein (80 aa).

The Carrier domain maps to 2–77 (KNIEERIKKI…KSIDFIQKKN (76 aa)). Position 37 is an O-(pantetheine 4'-phosphoryl)serine (Ser37).

It belongs to the acyl carrier protein (ACP) family. 4'-phosphopantetheine is transferred from CoA to a specific serine of apo-ACP by AcpS. This modification is essential for activity because fatty acids are bound in thioester linkage to the sulfhydryl of the prosthetic group.

The protein resides in the cytoplasm. It functions in the pathway lipid metabolism; fatty acid biosynthesis. In terms of biological role, carrier of the growing fatty acid chain in fatty acid biosynthesis. The polypeptide is Acyl carrier protein (Buchnera aphidicola subsp. Acyrthosiphon pisum (strain APS) (Acyrthosiphon pisum symbiotic bacterium)).